A 173-amino-acid polypeptide reads, in one-letter code: Bifunctional protein PyrR (173 aa).

A PRPP-binding motif is present at residues 93-105 (VILVDDVLYTGRT).

Belongs to the purine/pyrimidine phosphoribosyltransferase family. PyrR subfamily. Homodimer and homohexamer; in equilibrium.

It catalyses the reaction UMP + diphosphate = 5-phospho-alpha-D-ribose 1-diphosphate + uracil. Regulates transcriptional attenuation of the pyrimidine nucleotide (pyr) operon by binding in a uridine-dependent manner to specific sites on pyr mRNA. This disrupts an antiterminator hairpin in the RNA and favors formation of a downstream transcription terminator, leading to a reduced expression of downstream genes. Its function is as follows. Also displays a weak uracil phosphoribosyltransferase activity which is not physiologically significant. The sequence is that of Bifunctional protein PyrR from Streptococcus thermophilus (strain CNRZ 1066).